Consider the following 151-residue polypeptide: 1,4-dihydroxy-2-naphthoyl-CoA hydrolase (151 aa).

D23 is a catalytic residue.

Belongs to the 4-hydroxybenzoyl-CoA thioesterase family. DHNA-CoA hydrolase subfamily.

It catalyses the reaction 1,4-dihydroxy-2-naphthoyl-CoA + H2O = 1,4-dihydroxy-2-naphthoate + CoA + H(+). It functions in the pathway cofactor biosynthesis; phylloquinone biosynthesis. Its pathway is quinol/quinone metabolism; 1,4-dihydroxy-2-naphthoate biosynthesis; 1,4-dihydroxy-2-naphthoate from chorismate: step 7/7. In terms of biological role, catalyzes the hydrolysis of 1,4-dihydroxy-2-naphthoyl-CoA (DHNA-CoA) to 1,4-dihydroxy-2-naphthoate (DHNA), a reaction involved in phylloquinone (vitamin K1) biosynthesis. The chain is 1,4-dihydroxy-2-naphthoyl-CoA hydrolase from Prochlorococcus marinus (strain MIT 9211).